A 77-amino-acid polypeptide reads, in one-letter code: Acyl carrier protein (77 aa).

Residues 1-76 (MENFDKVKDI…DAVNFINNLE (76 aa)) form the Carrier domain. Residue Ser36 is modified to O-(pantetheine 4'-phosphoryl)serine.

This sequence belongs to the acyl carrier protein (ACP) family. Post-translationally, 4'-phosphopantetheine is transferred from CoA to a specific serine of apo-ACP by AcpS. This modification is essential for activity because fatty acids are bound in thioester linkage to the sulfhydryl of the prosthetic group.

The protein resides in the cytoplasm. Its pathway is lipid metabolism; fatty acid biosynthesis. Its function is as follows. Carrier of the growing fatty acid chain in fatty acid biosynthesis. This Staphylococcus carnosus (strain TM300) protein is Acyl carrier protein.